The chain runs to 341 residues: tRNA N6-adenosine threonylcarbamoyltransferase (341 aa).

Positions 117 and 121 each coordinate Fe cation. Residues 140–144 (VVSGG), D173, G186, and N278 contribute to the substrate site. D306 contacts Fe cation.

Belongs to the KAE1 / TsaD family. Fe(2+) serves as cofactor.

It localises to the cytoplasm. The catalysed reaction is L-threonylcarbamoyladenylate + adenosine(37) in tRNA = N(6)-L-threonylcarbamoyladenosine(37) in tRNA + AMP + H(+). Its function is as follows. Required for the formation of a threonylcarbamoyl group on adenosine at position 37 (t(6)A37) in tRNAs that read codons beginning with adenine. Is involved in the transfer of the threonylcarbamoyl moiety of threonylcarbamoyl-AMP (TC-AMP) to the N6 group of A37, together with TsaE and TsaB. TsaD likely plays a direct catalytic role in this reaction. The sequence is that of tRNA N6-adenosine threonylcarbamoyltransferase from Symbiobacterium thermophilum (strain DSM 24528 / JCM 14929 / IAM 14863 / T).